Here is a 132-residue protein sequence, read N- to C-terminus: Myelin P2 protein (132 aa).

Serine 2 carries the post-translational modification N-acetylserine. Residues arginine 107 and 127–129 each bind (9Z)-octadecenoate; that span reads RIY. Hexadecanoate contacts are provided by residues arginine 107 and 127–129; that span reads RIY.

It belongs to the calycin superfamily. Fatty-acid binding protein (FABP) family. Monomer.

The protein resides in the cytoplasm. Its function is as follows. May play a role in lipid transport protein in Schwann cells. May bind cholesterol. The sequence is that of Myelin P2 protein (PMP2) from Oryctolagus cuniculus (Rabbit).